We begin with the raw amino-acid sequence, 202 residues long: ATP-dependent Clp protease proteolytic subunit (202 aa).

Catalysis depends on Ser106, which acts as the Nucleophile. His131 is an active-site residue.

It belongs to the peptidase S14 family. In terms of assembly, fourteen ClpP subunits assemble into 2 heptameric rings which stack back to back to give a disk-like structure with a central cavity, resembling the structure of eukaryotic proteasomes.

Its subcellular location is the cytoplasm. The enzyme catalyses Hydrolysis of proteins to small peptides in the presence of ATP and magnesium. alpha-casein is the usual test substrate. In the absence of ATP, only oligopeptides shorter than five residues are hydrolyzed (such as succinyl-Leu-Tyr-|-NHMec, and Leu-Tyr-Leu-|-Tyr-Trp, in which cleavage of the -Tyr-|-Leu- and -Tyr-|-Trp bonds also occurs).. Its function is as follows. Cleaves peptides in various proteins in a process that requires ATP hydrolysis. Has a chymotrypsin-like activity. Plays a major role in the degradation of misfolded proteins. The chain is ATP-dependent Clp protease proteolytic subunit from Acidovorax ebreus (strain TPSY) (Diaphorobacter sp. (strain TPSY)).